Consider the following 421-residue polypeptide: UDP-N-acetylglucosamine 1-carboxyvinyltransferase (421 aa).

22 to 23 (KN) provides a ligand contact to phosphoenolpyruvate. R92 contacts UDP-N-acetyl-alpha-D-glucosamine. Catalysis depends on C116, which acts as the Proton donor. Position 116 is a 2-(S-cysteinyl)pyruvic acid O-phosphothioketal (C116). The UDP-N-acetyl-alpha-D-glucosamine site is built by D306 and V328.

The protein belongs to the EPSP synthase family. MurA subfamily.

The protein localises to the cytoplasm. It catalyses the reaction phosphoenolpyruvate + UDP-N-acetyl-alpha-D-glucosamine = UDP-N-acetyl-3-O-(1-carboxyvinyl)-alpha-D-glucosamine + phosphate. It functions in the pathway cell wall biogenesis; peptidoglycan biosynthesis. Cell wall formation. Adds enolpyruvyl to UDP-N-acetylglucosamine. This chain is UDP-N-acetylglucosamine 1-carboxyvinyltransferase, found in Thermotoga maritima (strain ATCC 43589 / DSM 3109 / JCM 10099 / NBRC 100826 / MSB8).